Consider the following 144-residue polypeptide: MLDIKKIKEILPHRYPFLLVDRVISVEEGKKVTAIKNVTANEEFFNGHFPEYPVMPGVLIVEALAQTSGIAMMQSEANKGKIGLFAGIDGCRFKRQVVPGDQLLLEAEITRMRGAIAKAKVKATVEGDLVCEAEIMFALSDLPK.

His-48 is a catalytic residue.

Belongs to the thioester dehydratase family. FabZ subfamily.

It is found in the cytoplasm. The catalysed reaction is a (3R)-hydroxyacyl-[ACP] = a (2E)-enoyl-[ACP] + H2O. Functionally, involved in unsaturated fatty acids biosynthesis. Catalyzes the dehydration of short chain beta-hydroxyacyl-ACPs and long chain saturated and unsaturated beta-hydroxyacyl-ACPs. The sequence is that of 3-hydroxyacyl-[acyl-carrier-protein] dehydratase FabZ from Listeria monocytogenes serotype 4b (strain CLIP80459).